The sequence spans 89 residues: Long neurotoxin 1 (89 aa).

A signal peptide spans 1-21 (MKTLLLTLVVVTIVCLDLGDS). Disulfide bonds link cysteine 24–cysteine 41, cysteine 34–cysteine 58, cysteine 62–cysteine 74, and cysteine 75–cysteine 80.

It belongs to the three-finger toxin family. Long-chain subfamily. Type II alpha-neurotoxin sub-subfamily. As to expression, expressed by the venom gland.

The protein resides in the secreted. In terms of biological role, binds with high affinity to muscular (alpha-1/CHRNA1) and neuronal (alpha-7/CHRNA7) nicotinic acetylcholine receptor (nAChR) and inhibits acetylcholine from binding to the receptor, thereby impairing neuromuscular and neuronal transmission. In Pseudonaja textilis (Eastern brown snake), this protein is Long neurotoxin 1.